A 401-amino-acid polypeptide reads, in one-letter code: 8-amino-7-oxononanoate synthase (401 aa).

Residue Arg-24 participates in substrate binding. 111-112 (GF) is a pyridoxal 5'-phosphate binding site. His-137 is a binding site for substrate. The pyridoxal 5'-phosphate site is built by Ser-183, His-211, and Thr-240. Lys-243 bears the N6-(pyridoxal phosphate)lysine mark. Thr-357 contributes to the substrate binding site.

It belongs to the class-II pyridoxal-phosphate-dependent aminotransferase family. BioF subfamily. In terms of assembly, homodimer. It depends on pyridoxal 5'-phosphate as a cofactor.

The catalysed reaction is 6-carboxyhexanoyl-[ACP] + L-alanine + H(+) = (8S)-8-amino-7-oxononanoate + holo-[ACP] + CO2. It participates in cofactor biosynthesis; biotin biosynthesis. Catalyzes the decarboxylative condensation of pimeloyl-[acyl-carrier protein] and L-alanine to produce 8-amino-7-oxononanoate (AON), [acyl-carrier protein], and carbon dioxide. This is 8-amino-7-oxononanoate synthase from Xanthomonas campestris pv. campestris (strain B100).